The sequence spans 527 residues: Estrogen receptor beta (527 aa).

The tract at residues 1–145 is modulating; it reads MDVKNSPSSL…SPSSKRDAHF (145 aa). Phosphoserine; by MAPK is present on residues Ser84 and Ser102. 2 consecutive NR C4-type zinc fingers follow at residues 146 to 166 and 182 to 206; these read CAVCSDYASGYHYGVWSCEGC and CPATNQCTIDKNRRKSCQACRLRKC. The segment at residues 146–211 is a DNA-binding region (nuclear receptor); the sequence is CAVCSDYASG…RLRKCYEVGM (66 aa). One can recognise an NR LBD domain in the interval 261 to 495; it reads SPEQLVLTLL…DLLLEMLNAH (235 aa). The tract at residues 505-527 is disordered; the sequence is TRSERNLAEDSESKEGSQKPQAQ. The span at 506–521 shows a compositional bias: basic and acidic residues; the sequence is RSERNLAEDSESKEGS.

The protein belongs to the nuclear hormone receptor family. NR3 subfamily. As to quaternary structure, binds DNA as a homodimer. Can form a heterodimer with ESR1. Interacts with NCOA1, NCOA3, NCOA5 and NCOA6 coactivators, leading to a strong increase of transcription of target genes. Interacts with UBE1C and AKAP13. Interacts with DNTTIP2. Interacts with CCDC62 in the presence of estradiol/E2; this interaction seems to enhance the transcription of target genes. Interacts with DNAAF4. Interacts with PRMT2. Interacts with CCAR2 (via N-terminus) in a ligand-independent manner. Interacts with RBM39, in the presence of estradiol (E2). Interacts with STUB1/CHIP. Phosphorylation at Ser-84 and Ser-102 recruits NCOA1.

Its subcellular location is the nucleus. Its function is as follows. Nuclear hormone receptor. Binds estrogens with an affinity similar to that of ESR1/ER-alpha, and activates expression of reporter genes containing estrogen response elements (ERE) in an estrogen-dependent manner. The protein is Estrogen receptor beta (ESR2) of Ovis aries (Sheep).